Consider the following 248-residue polypeptide: Ribosomal RNA small subunit methyltransferase A (248 aa).

Residues His-11, Leu-13, Gly-38, Glu-60, Asp-83, and Asn-101 each coordinate S-adenosyl-L-methionine.

Belongs to the class I-like SAM-binding methyltransferase superfamily. rRNA adenine N(6)-methyltransferase family. RsmA subfamily.

It localises to the cytoplasm. It catalyses the reaction adenosine(1518)/adenosine(1519) in 16S rRNA + 4 S-adenosyl-L-methionine = N(6)-dimethyladenosine(1518)/N(6)-dimethyladenosine(1519) in 16S rRNA + 4 S-adenosyl-L-homocysteine + 4 H(+). Functionally, specifically dimethylates two adjacent adenosines (A1518 and A1519) in the loop of a conserved hairpin near the 3'-end of 16S rRNA in the 30S particle. May play a critical role in biogenesis of 30S subunits. The sequence is that of Ribosomal RNA small subunit methyltransferase A from Aquifex aeolicus (strain VF5).